A 388-amino-acid chain; its full sequence is Mycinamicin VIII C21 methyl hydroxylase (388 aa).

The heme site is built by His-87, Arg-91, Arg-279, His-335, and Cys-337.

The protein belongs to the cytochrome P450 family. Requires heme as cofactor.

It functions in the pathway antibiotic biosynthesis; mycinamicin biosynthesis. Functionally, involved in the biosynthesis of mycinamicin, a 16-membered macrolide antibiotic. Catalyzes hydroxylation at the C21 methyl group of mycinamicin VIII, the earliest macrolide form in the postpolyketide synthase tailoring pathway, leading to mycinamicin VII. Uses ferredoxin MycCII in electron transfer for catalysis. This is Mycinamicin VIII C21 methyl hydroxylase from Micromonospora griseorubida.